The sequence spans 349 residues: Nuclear distribution protein nudE homolog 1 (349 aa).

Residues 23 to 189 (AMKYKTCSEE…ELAVQQKQEK (167 aa)) adopt a coiled-coil conformation. Positions 182 to 201 (AVQQKQEKPKSNMGSPETER) are disordered.

It belongs to the nudE family. In terms of assembly, self-associates. Interacts with pafah1b1. In terms of processing, phosphorylated in mitosis.

Its subcellular location is the cytoplasm. The protein resides in the cytoskeleton. It is found in the microtubule organizing center. It localises to the centrosome. The protein localises to the spindle. Its subcellular location is the chromosome. The protein resides in the centromere. It is found in the kinetochore. It localises to the cleavage furrow. The protein localises to the cytoplasmic vesicle membrane. Functionally, required for centrosome duplication and formation and function of the mitotic spindle. This chain is Nuclear distribution protein nudE homolog 1 (nde1), found in Xenopus tropicalis (Western clawed frog).